The sequence spans 92 residues: Small ribosomal subunit protein uS19 (92 aa).

It belongs to the universal ribosomal protein uS19 family.

In terms of biological role, protein S19 forms a complex with S13 that binds strongly to the 16S ribosomal RNA. In Geobacillus sp. (strain WCH70), this protein is Small ribosomal subunit protein uS19.